A 57-amino-acid polypeptide reads, in one-letter code: Stress response protein (57 aa).

Residues 6 to 10 (RKERR) carry the Nuclear localization signal motif.

In terms of tissue distribution, mesophyll protoplasts.

It localises to the nucleus. Its function is as follows. Stress response. May play a role in the reentering of protoplasts into the cell cycle. The protein is Stress response protein of Nicotiana sylvestris (Wood tobacco).